The following is a 477-amino-acid chain: Calcium uptake protein 1, mitochondrial (477 aa).

Residues 1–33 constitute a mitochondrion transit peptide; the sequence is MFRLNALSALAELAVGSRWYHGTSQPTQTKRRL. Residues 55–108 form a disordered region; the sequence is AHAESPPSVNSKKTDAGDKGKSKDTREVSSHEGSAADTAAEPYPEEKKKKRSGF. The segment covering 66–84 has biased composition (basic and acidic residues); that stretch reads KKTDAGDKGKSKDTREVSS. Residues 101 to 112 are polybasic region; the sequence is KKKKRSGFRDRK. A Phosphoserine modification is found at S124. Residues 128–131 are k/R-ring; the sequence is KIFR. One can recognise an EF-hand 1 domain in the interval 220–255; the sequence is TPQRNFEIAFKMFDLNGDGEVDMEEFEQVQSIIRSQ. D233, N235, D237, E239, and E244 together coordinate Ca(2+). The segment at 261–265 is k/R-ring; it reads RHRDR. In terms of domain architecture, EF-hand 2; degenerate spans 356-376; it reads KDGKGLTFQEVENFFTFLKNI. Positions 410 to 445 constitute an EF-hand 3 domain; that stretch reads LSDHVCDVVFALFDCDGNGELSNKEFVSIMKQRLMR. Positions 423, 425, 427, 429, and 434 each coordinate Ca(2+). Residue R457 is modified to Asymmetric dimethylarginine. A C-helix region region spans residues 457-467; it reads RLMQAMWKCAQ.

It belongs to the MICU1 family. MICU1 subfamily. Heterodimer; disulfide-linked; heterodimerizes with MICU2 or MICU3. Homodimer; disulfide-linked. Component of the uniplex complex, composed of MCU, EMRE/SMDT1, MICU1 and MICU2 (or MICU3) in a 4:4:1:1 stoichiometry. The composition of calcium sensors within the uniplex complex can differ depending on tissues: a MICU1 homodimer can be present instead of the MICU1-MICU2 heterodimer in skeletal-muscle and kidney. MICU1 is recruited to the uniplex complex by EMRE/SMDT1, and it associates with MCU at low calcium levels, occluding the pore of the MCU channel. Associates with the MICOS complex. Interacts with SLC25A23. Interacts with CHCHD4/MIA40; which introduces the interchain disulfide bond with MICU2. Interacts (when methylated) with UCP2; leading to decrease the calcium sensitivity of MICU1. In terms of processing, phosphorylation at Ser-124 by AKT1 impairs its maturation and stability. Post-translationally, asymmetric dimethylation at Arg-457 by PRMT1 decreases the calcium sensitivity of MICU1 by promoting interaction with UCP2. Degraded by YME1L1 when not complexed as homodimer or heterodimer. Not degraded when complexed as homodimer or heterodimer; the presence of the interchain disulfide bond protecting MICU1 from degradation by YME1L1.

It localises to the mitochondrion intermembrane space. The protein localises to the mitochondrion inner membrane. Functionally, calcium sensor of the mitochondrial calcium uniporter (MCU) channel, which senses calcium level via its EF-hand domains. MICU1 and MICU2 (or MICU3) form a disulfide-linked heterodimer that stimulates and inhibits MCU activity, depending on the concentration of calcium. At low calcium levels, MICU1 occludes the pore of the MCU channel, preventing mitochondrial calcium uptake. At higher calcium levels, calcium-binding to MICU1 and MICU2 (or MICU3) induces a conformational change that weakens MCU-MICU1 interactions and moves the MICU1-MICU2 heterodimer away from the pore, allowing calcium permeation through the MCU channel. Also required to protect against manganese toxicity by preventing manganese uptake by MCU: mechanistically, manganese-binding to its EF-hand domains does not induce any conformational change, maintaining MCU pore occlusion. Acts as a regulator of mitochondrial cristae structure independently of its ability to regulate the mitochondrial calcium uniporter channel. Regulates glucose-dependent insulin secretion in pancreatic beta-cells by regulating mitochondrial calcium uptake. Induces T-helper 1-mediated autoreactivity, which is accompanied by the release of IFNG. The chain is Calcium uptake protein 1, mitochondrial (Micu1) from Rattus norvegicus (Rat).